The following is a 430-amino-acid chain: Endo-beta-1,4-glucanase celB (430 aa).

Positions 1–16 (MALLLSLSLLATTISA) are cleaved as a signal peptide. Asn-43 and Asn-153 each carry an N-linked (GlcNAc...) asparagine glycan. The active-site Nucleophile is Glu-216. The active-site Proton donor is Glu-221. N-linked (GlcNAc...) asparagine glycosylation occurs at Asn-395.

The protein belongs to the glycosyl hydrolase 7 (cellulase C) family.

It is found in the secreted. It catalyses the reaction Endohydrolysis of (1-&gt;4)-beta-D-glucosidic linkages in cellulose, lichenin and cereal beta-D-glucans.. Functionally, has endoglucanase activity on substrates containing beta-1,4 glycosidic bonds, like in carboxymethylcellulose (CMC), hydroxyethylcellulose (HEC) and beta-glucan. Involved in the degradation of complex natural cellulosic substrates. The chain is Endo-beta-1,4-glucanase celB (celB) from Emericella nidulans (strain FGSC A4 / ATCC 38163 / CBS 112.46 / NRRL 194 / M139) (Aspergillus nidulans).